The chain runs to 199 residues: Transgelin-2 (199 aa).

Position 2 is an N-acetylalanine (A2). S11 carries the post-translational modification Phosphoserine. Residues K17 and K20 each carry the N6-acetyllysine modification. The Calponin-homology (CH) domain maps to 24 to 136 (ADLEQILIQW…RTLMNLGGLA (113 aa)). S163 is subject to Phosphoserine. K171 participates in a covalent cross-link: Glycyl lysine isopeptide (Lys-Gly) (interchain with G-Cter in SUMO2). A Calponin-like repeat occupies 174 to 199 (IGLQMGTNRGASQAGMTGYGMPRQIL). Position 180 is a phosphothreonine (T180). An omega-N-methylarginine mark is found at R182 and R196.

It belongs to the calponin family.

This is Transgelin-2 (Tagln2) from Mus musculus (Mouse).